Reading from the N-terminus, the 208-residue chain is Ras-related protein M-Ras (208 aa).

Residues Asp21, Gly22, Gly23, Val24, Gly25, Lys26, Ser27, Ala28, Phe38, Val39, Pro40, Tyr42, Pro44, and Thr45 each coordinate GTP. Ser27 serves as a coordination point for Mg(2+). The Effector region motif lies at 42–50 (YDPTIEDSY). Mg(2+) is bound by residues Thr45 and Asp67. GTP is bound by residues Gly70, Asn126, Lys127, Asp129, Ser156, Ala157, and Lys158. The residue at position 205 (Cys205) is a Cysteine methyl ester. Residue Cys205 is the site of S-geranylgeranyl cysteine attachment. Positions 206–208 (VIL) are cleaved as a propeptide — removed in mature form.

This sequence belongs to the small GTPase superfamily. Ras family. Component of the SHOC2-MRAS-PP1c (SMP) holophosphatase complex consisting of SHOC2, GTP-bound M-Ras/MRAS and the catalytic subunit of protein phosphatase 1 (either PPP1CA, PPP1CB or PPP1CC). Interacts (active GTP-bound form) with both SHOC2 and PP1c (all isoforms) to form a tertiary complex; SHOC2 and PP1c preferably bind M-Ras/MRAS, but they also bind K-Ras/KRAS, N-Ras/NRAS and H-Ras/HRAS. Interacts with RGL3. Interacts (active GTP-bound form preferentially) with RGS14. Requires Mg(2+) as cofactor. In terms of tissue distribution, expressed in skeletal muscle cells.

The protein resides in the cell membrane. It catalyses the reaction GTP + H2O = GDP + phosphate + H(+). Functionally, signal transducer in the Ras-MAPK signaling pathway that regulates cell proliferation and survival. Core component of the SHOC2-MRAS-PP1c (SMP) holophosphatase complex that regulates the MAPK pathway activation. The formation of the SMP complex only occurs when MRAS is GTP-bound. MRAS has low intrinsic GTPase activity and may require additional factors for activation. The SMP complex specifically dephosphorylates the inhibitory phosphorylation at 'Ser-259' of RAF1 kinase, 'Ser-365' of BRAF kinase and 'Ser-214' of ARAF kinase, stimulating their kinase activities. The protein is Ras-related protein M-Ras (Mras) of Rattus norvegicus (Rat).